The primary structure comprises 350 residues: UDP-glucose 4-epimerase (350 aa).

Residue 7 to 38 (KILVTGSAGFIGTHTVVQLLNNGFNVSIIDNF) participates in NAD(+) binding. A substrate-binding site is contributed by Ser133. The active-site Proton acceptor is the Tyr157.

Belongs to the NAD(P)-dependent epimerase/dehydratase family. NAD(+) serves as cofactor.

It catalyses the reaction UDP-alpha-D-glucose = UDP-alpha-D-galactose. The protein operates within carbohydrate metabolism; galactose metabolism. The chain is UDP-glucose 4-epimerase (GALE) from Pisum sativum (Garden pea).